Reading from the N-terminus, the 366-residue chain is Phospho-N-acetylmuramoyl-pentapeptide-transferase (366 aa).

The next 10 helical transmembrane spans lie at 3–23 (QIFI…PVLI), 54–74 (GIAV…VGLV), 80–100 (PGVS…LGFA), 120–140 (LVGQ…FPNA), 161–181 (IAIG…YLVI), 197–217 (LASG…FWQF), 238–258 (LSML…WNAA), 262–282 (IFMG…LSVT), 288–308 (LMIL…IQVV), and 341–361 (FWLL…AEWL).

This sequence belongs to the glycosyltransferase 4 family. MraY subfamily. Mg(2+) is required as a cofactor.

It is found in the cell membrane. It carries out the reaction UDP-N-acetyl-alpha-D-muramoyl-L-alanyl-gamma-D-glutamyl-meso-2,6-diaminopimeloyl-D-alanyl-D-alanine + di-trans,octa-cis-undecaprenyl phosphate = di-trans,octa-cis-undecaprenyl diphospho-N-acetyl-alpha-D-muramoyl-L-alanyl-D-glutamyl-meso-2,6-diaminopimeloyl-D-alanyl-D-alanine + UMP. Its pathway is cell wall biogenesis; peptidoglycan biosynthesis. Functionally, catalyzes the initial step of the lipid cycle reactions in the biosynthesis of the cell wall peptidoglycan: transfers peptidoglycan precursor phospho-MurNAc-pentapeptide from UDP-MurNAc-pentapeptide onto the lipid carrier undecaprenyl phosphate, yielding undecaprenyl-pyrophosphoryl-MurNAc-pentapeptide, known as lipid I. The protein is Phospho-N-acetylmuramoyl-pentapeptide-transferase of Corynebacterium jeikeium (strain K411).